The sequence spans 329 residues: Phosphate acyltransferase (329 aa).

It belongs to the PlsX family. Homodimer. Probably interacts with PlsY.

The protein resides in the cytoplasm. The enzyme catalyses a fatty acyl-[ACP] + phosphate = an acyl phosphate + holo-[ACP]. The protein operates within lipid metabolism; phospholipid metabolism. Functionally, catalyzes the reversible formation of acyl-phosphate (acyl-PO(4)) from acyl-[acyl-carrier-protein] (acyl-ACP). This enzyme utilizes acyl-ACP as fatty acyl donor, but not acyl-CoA. This is Phosphate acyltransferase from Geobacillus sp. (strain WCH70).